A 103-amino-acid chain; its full sequence is OMEGA-ectatommitoxin(02)-Rm1d (103 aa).

The signal sequence occupies residues 1–30 (MKDSYISIVIAYLMVTFILVSSMPIEGEKR). Disulfide bonds link cysteine 39/cysteine 54, cysteine 49/cysteine 70, and cysteine 72/cysteine 81. An EGF-like domain is found at 43–82 (LNDENYCFNGKCVHLVAQDEPGKPYYSCICDEFYIGERCG).

This sequence belongs to the EGF domain peptide family. In terms of tissue distribution, expressed by the venom gland.

It localises to the secreted. In terms of biological role, ant peptide with probable defensive activity which acts as a potent agonist of the mammalian epidermal growth factor receptor (EGFR). Mimics, both structurally and functionally, vertebrate epidermal growth factor (EGF) peptide hormones. In vivo, intraplantar injection in mice causes long-lasting (several days) hypersensitivity of the injected paw to both mechanical and thermal stimuli. Its long-lasting effect is unusual for venom toxins whose effects are usually immediate. One possible explanation is that it would reduce the duration of a nest attack, discourage future attacks, or enhance the actions of subsequent exposure to other pain-inducing venom peptides. This chain is OMEGA-ectatommitoxin(02)-Rm1d, found in Rhytidoponera metallica (Australian green-headed ant).